Here is a 64-residue protein sequence, read N- to C-terminus: Large ribosomal subunit protein bL35 (64 aa).

The protein belongs to the bacterial ribosomal protein bL35 family.

The sequence is that of Large ribosomal subunit protein bL35 from Kineococcus radiotolerans (strain ATCC BAA-149 / DSM 14245 / SRS30216).